Here is a 520-residue protein sequence, read N- to C-terminus: Alkyl hydroperoxide reductase subunit F (520 aa).

An FAD-binding site is contributed by 213–228 (DVLVVGGGPAGAAAAI). Cys-343 and Cys-346 form a disulfide bridge. Position 355–369 (355–369 (RVAVIGGGNSGVEAA)) interacts with NAD(+). Residue 476-486 (TSIPGVFAAGD) coordinates FAD.

The protein belongs to the class-II pyridine nucleotide-disulfide oxidoreductase family. Homodimer. FAD serves as cofactor.

In terms of biological role, serves to protect the cell against DNA damage by alkyl hydroperoxides. It can use either NADH or NADPH as electron donor for direct reduction of redox dyes or of alkyl hydroperoxides when combined with the AhpC protein. This is Alkyl hydroperoxide reductase subunit F (ahpF) from Pseudomonas putida (Arthrobacter siderocapsulatus).